Here is a 76-residue protein sequence, read N- to C-terminus: Sec-independent protein translocase protein TatA (76 aa).

The chain crosses the membrane as a helical span at residues 1-21; sequence MGGISIWQLLIIALIVVLLFG. The tract at residues 43-76 is disordered; that stretch reads MSSEDEKKAIEDTSAEKTAQTEEKKTESKDKEQA. The span at 46 to 76 shows a compositional bias: basic and acidic residues; it reads EDEKKAIEDTSAEKTAQTEEKKTESKDKEQA.

The protein belongs to the TatA/E family. As to quaternary structure, the Tat system comprises two distinct complexes: a TatABC complex, containing multiple copies of TatA, TatB and TatC subunits, and a separate TatA complex, containing only TatA subunits. Substrates initially bind to the TatABC complex, which probably triggers association of the separate TatA complex to form the active translocon.

It localises to the cell inner membrane. Functionally, part of the twin-arginine translocation (Tat) system that transports large folded proteins containing a characteristic twin-arginine motif in their signal peptide across membranes. TatA could form the protein-conducting channel of the Tat system. The protein is Sec-independent protein translocase protein TatA of Shewanella loihica (strain ATCC BAA-1088 / PV-4).